The following is a 148-amino-acid chain: Protein ADM2 (148 aa).

An N-terminal signal peptide occupies residues 1-24; that stretch reads MARIPTAALGCISLLCLQLPGSLS. The propeptide occupies 25–98; it reads RSLGGDPRPV…HSGPRRHSGP (74 aa). 2 disordered regions span residues 26–57 and 70–101; these read SLGG…APRP and RGAG…PRRT. Cysteines 110 and 115 form a disulfide. Tyr147 is subject to Tyrosine amide.

The protein belongs to the adrenomedullin family. As to expression, expressed in the esophagus, stomach, jejunum, ileum, ileocecum, ascending colon, transverse colon, descending colon and rectum. Expressed in myocardial cells of the heart, renal tubular cells, hypothalamus, and pituitary.

It localises to the secreted. Its function is as follows. Intermedin/ADM2 is a peptide hormone that plays a role as physiological regulator of gastrointestinal and cardiovascular bioactivities mediated by the CALCRL-RAMPs receptor complexes. Activates the cAMP-dependent pathway through interaction with CALCRL-RAMP3 receptor complex. The protein is Protein ADM2 of Homo sapiens (Human).